The chain runs to 104 residues: uncharacterized protein (104 aa).

This is an uncharacterized protein from Mycoplasma genitalium (strain ATCC 33530 / DSM 19775 / NCTC 10195 / G37) (Mycoplasmoides genitalium).